The chain runs to 392 residues: Phosphopentomutase (392 aa).

Mn(2+)-binding residues include aspartate 15, aspartate 287, histidine 292, aspartate 328, histidine 329, and histidine 340.

This sequence belongs to the phosphopentomutase family. The cofactor is Mn(2+).

It is found in the cytoplasm. It catalyses the reaction 2-deoxy-alpha-D-ribose 1-phosphate = 2-deoxy-D-ribose 5-phosphate. The enzyme catalyses alpha-D-ribose 1-phosphate = D-ribose 5-phosphate. The protein operates within carbohydrate degradation; 2-deoxy-D-ribose 1-phosphate degradation; D-glyceraldehyde 3-phosphate and acetaldehyde from 2-deoxy-alpha-D-ribose 1-phosphate: step 1/2. Its function is as follows. Isomerase that catalyzes the conversion of deoxy-ribose 1-phosphate (dRib-1-P) and ribose 1-phosphate (Rib-1-P) to deoxy-ribose 5-phosphate (dRib-5-P) and ribose 5-phosphate (Rib-5-P), respectively. This Syntrophotalea carbinolica (strain DSM 2380 / NBRC 103641 / GraBd1) (Pelobacter carbinolicus) protein is Phosphopentomutase.